We begin with the raw amino-acid sequence, 467 residues long: Light-independent protochlorophyllide reductase subunit N (467 aa).

3 residues coordinate [4Fe-4S] cluster: C24, C49, and C109.

This sequence belongs to the BchN/ChlN family. In terms of assembly, protochlorophyllide reductase is composed of three subunits; ChlL, ChlN and ChlB. Forms a heterotetramer of two ChlB and two ChlN subunits. It depends on [4Fe-4S] cluster as a cofactor.

It catalyses the reaction chlorophyllide a + oxidized 2[4Fe-4S]-[ferredoxin] + 2 ADP + 2 phosphate = protochlorophyllide a + reduced 2[4Fe-4S]-[ferredoxin] + 2 ATP + 2 H2O. It functions in the pathway porphyrin-containing compound metabolism; chlorophyll biosynthesis (light-independent). Its function is as follows. Component of the dark-operative protochlorophyllide reductase (DPOR) that uses Mg-ATP and reduced ferredoxin to reduce ring D of protochlorophyllide (Pchlide) to form chlorophyllide a (Chlide). This reaction is light-independent. The NB-protein (ChlN-ChlB) is the catalytic component of the complex. The chain is Light-independent protochlorophyllide reductase subunit N from Leptolyngbya boryana (Plectonema boryanum).